The following is a 293-amino-acid chain: Ribosomal protein L11 methyltransferase (293 aa).

4 residues coordinate S-adenosyl-L-methionine: T145, G166, D188, and N230.

The protein belongs to the methyltransferase superfamily. PrmA family.

The protein resides in the cytoplasm. It carries out the reaction L-lysyl-[protein] + 3 S-adenosyl-L-methionine = N(6),N(6),N(6)-trimethyl-L-lysyl-[protein] + 3 S-adenosyl-L-homocysteine + 3 H(+). Its function is as follows. Methylates ribosomal protein L11. In Salmonella arizonae (strain ATCC BAA-731 / CDC346-86 / RSK2980), this protein is Ribosomal protein L11 methyltransferase.